Here is a 455-residue protein sequence, read N- to C-terminus: E3 ubiquitin-protein ligase IPI1 (455 aa).

The interval 1–42 (MGAEEEEEPASAVGREGGGGGGGARAAGAGAGGDTADDDDSG) is disordered. The span at 15–33 (REGGGGGGGARAAGAGAGG) shows a compositional bias: gly residues. The RING-type; atypical zinc finger occupies 51–97 (CSICLDAVVAGGGDRSTARLQCGHEFHLDCIGSAFNAKGVMQCPNCR). 2 disordered regions span residues 286–311 (LDSDSQQRGSLPSVYGNGSGSRSRIP) and 426–455 (QWIGAGRSPPPPPPPPADNSSYRQMHIPRM). Pro residues predominate over residues 433–442 (SPPPPPPPPA).

Interacts with SPL14/IPA1.

The protein resides in the nucleus. It carries out the reaction S-ubiquitinyl-[E2 ubiquitin-conjugating enzyme]-L-cysteine + [acceptor protein]-L-lysine = [E2 ubiquitin-conjugating enzyme]-L-cysteine + N(6)-ubiquitinyl-[acceptor protein]-L-lysine.. It functions in the pathway protein modification; protein ubiquitination. Its function is as follows. Functions as an E3 ligase that promotes polyubiquitination of SPL14/IPA1 for subsequent proteasomal degradation. Regulates plant architecture by modulating SPL14/IPA1 abundance. Promotes the degradation of SPL14/IPA1 in panicles, while it stabilizes SPL14/IPA1 in shoot apices. Ubiquitinates the SPL14/IPA1-mediated complex with 'Lys-48'-linked polyubiquitin in panicles and 'Lys-63'-linked polyubiquitin chains in the shoot apex. The polypeptide is E3 ubiquitin-protein ligase IPI1 (Oryza sativa subsp. japonica (Rice)).